Here is a 283-residue protein sequence, read N- to C-terminus: Interferon alpha-inducible protein 27-like protein 2B (283 aa).

Residues 1–90 (MKRKFVGAAI…AVGTATGARA (90 aa)) constitute a mitochondrion transit peptide. Residues 90 to 120 (AEGSMGASREQESGPQDPPQELQEPQEPPSC) form a disordered region. 3 consecutive transmembrane segments (helical) span residues 130 to 150 (FVGA…ALSA), 176 to 196 (GGGI…ILGL), and 202 to 222 (IILG…MGAC). The interval 227-283 (PGLQDLQQEPKEPQEPQELQKQQEPQEPQELQKQQETQETQETQELQKTQEPPSYEK) is disordered. Residues 242 to 283 (PQELQKQQEPQEPQELQKQQETQETQETQELQKTQEPPSYEK) show a composition bias toward low complexity.

The protein belongs to the IFI6/IFI27 family. As to quaternary structure, homooligomer. Interacts with BAK1. Interacts with BAX. Interacts with adenine nucleotide translocase.

The protein resides in the mitochondrion inner membrane. Its function is as follows. Functions in the intrinsic apoptotic signaling pathway and may have an interferon-induced antiviral activity. In Mus musculus (Mouse), this protein is Interferon alpha-inducible protein 27-like protein 2B.